We begin with the raw amino-acid sequence, 372 residues long: MNIETIITRAWQRKAAWLWLLLPVSWLYALLMVLRRQAYKVGILASYRAPIPVMVIGNITVGGSGKTPLIIALVRHLQQQGIKVGVISRGYGGDSSQMPALVTTESPPNVVGDEPCLIVNTTGTAMAVSPNRQQAIAILLEAYPDLQLIIADDGLQHYALQRDIEWVVVDAARGFGNKQLLPTGFLREPISRLKDANVIYHHKPDASSIYNKSDHNTLLTEHLTMHLQPDDLELLWSSNNQIDNLAVVAMAPEKGSQVHAVSGIGYPQRFFDTLNALGFEVIPHPYPDHYDFSLDELLQYADHPIIVTSKDAVKIRALIMQAIINQALSDEYKELVSRLWVLPVTAVLSDSCYESLQQQLQTLDIDISMRKQ.

60–67 (TVGGSGKT) serves as a coordination point for ATP.

This sequence belongs to the LpxK family.

It carries out the reaction a lipid A disaccharide + ATP = a lipid IVA + ADP + H(+). It participates in glycolipid biosynthesis; lipid IV(A) biosynthesis; lipid IV(A) from (3R)-3-hydroxytetradecanoyl-[acyl-carrier-protein] and UDP-N-acetyl-alpha-D-glucosamine: step 6/6. Transfers the gamma-phosphate of ATP to the 4'-position of a tetraacyldisaccharide 1-phosphate intermediate (termed DS-1-P) to form tetraacyldisaccharide 1,4'-bis-phosphate (lipid IVA). This is Tetraacyldisaccharide 4'-kinase from Psychrobacter cryohalolentis (strain ATCC BAA-1226 / DSM 17306 / VKM B-2378 / K5).